A 160-amino-acid chain; its full sequence is Competence protein ComGD (160 aa).

A helical transmembrane segment spans residues 30 to 50; that stretch reads AFTMLESLLVLGLVSILALGL.

In terms of assembly, the transformation pili are flexible filaments, consisting mainly of the major pilin ComGC and smaller amounts of the minor pilins, including at least ComGD, ComGF and ComGG, and perhaps ComGE. Interacts with ComGE. Interacts with ComGF. Interacts with ComGG.

The protein resides in the cell membrane. The protein localises to the cell surface. Its subcellular location is the fimbrium. In terms of biological role, required for formation of the type IV-like pilus (T4P) that plays a role in transformation. Transformation pili are dynamically extended and retracted, perhaps thereby promoting DNA uptake and transformation. Involved in transformation. Required for DNA binding. This chain is Competence protein ComGD, found in Streptococcus pneumoniae (strain ATCC BAA-255 / R6).